Consider the following 520-residue polypeptide: Cholesterol side-chain cleavage enzyme, mitochondrial (520 aa).

The N-terminal 39 residues, Met-1–Gly-39, are a transit peptide targeting the mitochondrion. The tract at residues Trp-27–Tyr-48 is disordered. Position 461 (Cys-461) interacts with heme.

The protein belongs to the cytochrome P450 family. As to quaternary structure, interacts with FDX1/adrenodoxin. Heme serves as cofactor.

The protein resides in the mitochondrion inner membrane. The catalysed reaction is 6 reduced [adrenodoxin] + cholesterol + 3 O2 + 6 H(+) = 4-methylpentanal + pregnenolone + 6 oxidized [adrenodoxin] + 4 H2O. It carries out the reaction 2 reduced [adrenodoxin] + cholesterol + O2 + 2 H(+) = (22R)-hydroxycholesterol + 2 oxidized [adrenodoxin] + H2O. It catalyses the reaction (22R)-hydroxycholesterol + 2 reduced [adrenodoxin] + O2 + 2 H(+) = (20R,22R)-20,22-dihydroxycholesterol + 2 oxidized [adrenodoxin] + H2O. The enzyme catalyses (20R,22R)-20,22-dihydroxycholesterol + 2 reduced [adrenodoxin] + O2 + 2 H(+) = 4-methylpentanal + pregnenolone + 2 oxidized [adrenodoxin] + 2 H2O. It participates in lipid metabolism; C21-steroid hormone metabolism. The protein operates within steroid metabolism; cholesterol metabolism. Its function is as follows. A cytochrome P450 monooxygenase that catalyzes the side-chain hydroxylation and cleavage of cholesterol to pregnenolone, the precursor of most steroid hormones. Catalyzes three sequential oxidation reactions of cholesterol, namely the hydroxylation at C22 followed with the hydroxylation at C20 to yield 20R,22R-hydroxycholesterol that is further cleaved between C20 and C22 to yield the C21-steroid pregnenolone and 4-methylpentanal. Mechanistically, uses molecular oxygen inserting one oxygen atom into a substrate and reducing the second into a water molecule. Two electrons are provided by NADPH via a two-protein mitochondrial transfer system comprising flavoprotein FDXR (adrenodoxin/ferredoxin reductase) and nonheme iron-sulfur protein FDX1 or FDX2 (adrenodoxin/ferredoxin). This is Cholesterol side-chain cleavage enzyme, mitochondrial from Capra hircus (Goat).